A 394-amino-acid polypeptide reads, in one-letter code: MAKEKFERVKPHVNVGTIGHVDHGKTTLTAAISSVLTKTYGGTKRDFAQIDNAPEERERGITINTSHIEYDTPSRHYAHVDCPGHADYVKNMITGAAQMDGAILVVASTDGPMPQTREHILLSRQVGVPFIIVFMNKCDMVDDEELLELVEMEVRELLSEYDFPGDDLPVIQGSALKALEGEPEWEAKILELAEALDTYIPEPERAIDGAFILPIEDVFSIAGRGTVVTGRVERGIIKVGEEVEIVGIKDTTKSTCTGVEMFRKLLDEGRAGENCGVLLRGIKREDVERGQVLAAPGSITPHTTFKSEIYVLSKEEGGRHTPFFKGYRPQFYFRTTDVTGTIELPEGVEMVMPGDNVAMTVTLICPIAMDEGLRFAIREGGRTVGAGVVAEIVA.

Positions 10–204 constitute a tr-type G domain; that stretch reads KPHVNVGTIG…ALDTYIPEPE (195 aa). The segment at 19 to 26 is G1; that stretch reads GHVDHGKT. Residue 19-26 coordinates GTP; it reads GHVDHGKT. T26 is a Mg(2+) binding site. A G2 region spans residues 60 to 64; it reads GITIN. The segment at 81–84 is G3; sequence DCPG. GTP contacts are provided by residues 81–85 and 136–139; these read DCPGH and NKCD. The tract at residues 136–139 is G4; it reads NKCD. The tract at residues 174 to 176 is G5; it reads SAL.

The protein belongs to the TRAFAC class translation factor GTPase superfamily. Classic translation factor GTPase family. EF-Tu/EF-1A subfamily. Monomer.

It is found in the cytoplasm. The catalysed reaction is GTP + H2O = GDP + phosphate + H(+). In terms of biological role, GTP hydrolase that promotes the GTP-dependent binding of aminoacyl-tRNA to the A-site of ribosomes during protein biosynthesis. In Shewanella pealeana (strain ATCC 700345 / ANG-SQ1), this protein is Elongation factor Tu.